Consider the following 668-residue polypeptide: Neurexin-3-beta (668 aa).

The first 35 residues, 1–35, serve as a signal peptide directing secretion; it reads MHLRTNPSICPGRRPAWTLWMCSLFWGCIVSSVWS. Over 36–593 the chain is Extracellular; the sequence is SSNVASSASS…EVVRESSSTT (558 aa). One can recognise a Laminin G-like domain in the interval 84–284; it reads ATYIFGKSGG…NPNIKINGSV (201 aa). The segment at 510–529 is disordered; sequence TASSSTGMVPKLPAGKMNNR. A helical transmembrane segment spans residues 594–614; sequence GMVVGIVAAAALCILILLYAM. Topologically, residues 615–668 are cytoplasmic; that stretch reads YKYRNRDEGSYQVDETRNYISNSAQSNGTLMKEKQQSSKSGHKKQKNKDKEYYV. The disordered stretch occupies residues 636-668; sequence NSAQSNGTLMKEKQQSSKSGHKKQKNKDKEYYV.

It belongs to the neurexin family. Processed by alpha-secretase leading to the formation of an extracellular soluble protein as well as a C-terminal membrane-embedded fragment (CTF). Proteolysis of these CTFs by gamma-secretase releases intracellular domains (ICDs) and extracellular peptides. Brain and arteries (at protein level).

It localises to the membrane. Functionally, neuronal cell surface protein that may be involved in cell recognition and cell adhesion. Plays a role in angiogenesis. The sequence is that of Neurexin-3-beta (NRXN3) from Gallus gallus (Chicken).